The following is a 196-amino-acid chain: Rho-related GTP-binding protein RhoB (196 aa).

Residue 12–19 coordinates GTP; the sequence is GDGACGKT. The O-linked (GlcNAc) tyrosine; by Photorhabdus PAU_02230 glycan is linked to Y34. Positions 34–42 match the Effector region motif; that stretch reads YVPTVFENY. T37 carries (Microbial infection) O-linked (Glc) threonine; by C.difficile toxins TcdA and TcdB glycosylation. An ADP-ribosylasparagine; by botulinum toxin modification is found at N41. GTP is bound by residues 59-63 and 117-120; these read DTAGQ and NKKD. Y154 carries the post-translational modification Phosphotyrosine. S-palmitoyl cysteine attachment occurs at residues C189 and C192. The residue at position 193 (C193) is a Cysteine methyl ester. C193 carries S-farnesyl cysteine; in plasma membrane form lipidation. C193 is lipidated: S-geranylgeranyl cysteine; in endosomal form. A propeptide spans 194-196 (removed in mature form); sequence KVL.

It belongs to the small GTPase superfamily. Rho family. As to quaternary structure, binds ROCK1 and ROCK2. Also binds PKN1/PRK1. Interacts with ARGGEF3. Interacts with RTKN. Interacts with AKAP13. Interacts with RIPOR1. Prenylation specifies the subcellular location of RHOB. The farnesylated form is localized to the plasma membrane while the geranylgeranylated form is localized to the endosome. Post-translationally, (Microbial infection) Glycosylated at Tyr-34 by Photorhabdus asymbiotica toxin PAU_02230. Mono-O-GlcNAcylation by PAU_02230 inhibits downstream signaling by an impaired interaction with diverse regulator and effector proteins of Rho and leads to actin disassembly. In terms of processing, (Microbial infection) Glucosylated at Thr-37 by C.difficile toxins TcdA and TcdB in the colonic epithelium. Monoglucosylation completely prevents the recognition of the downstream effector, blocking the GTPases in their inactive form, leading to actin cytoskeleton disruption.

Its subcellular location is the late endosome membrane. It localises to the cell membrane. The protein localises to the nucleus. It is found in the cleavage furrow. In terms of biological role, mediates apoptosis in neoplastically transformed cells after DNA damage. Not essential for development but affects cell adhesion and growth factor signaling in transformed cells. Plays a negative role in tumorigenesis as deletion causes tumor formation. Involved in intracellular protein trafficking of a number of proteins. Targets PKN1 to endosomes and is involved in trafficking of the EGF receptor from late endosomes to lysosomes. Also required for stability and nuclear trafficking of AKT1/AKT which promotes endothelial cell survival during vascular development. Serves as a microtubule-dependent signal that is required for the myosin contractile ring formation during cell cycle cytokinesis. Required for genotoxic stress-induced cell death in breast cancer cells. The polypeptide is Rho-related GTP-binding protein RhoB (RHOB) (Homo sapiens (Human)).